Reading from the N-terminus, the 433-residue chain is Sulfhydrylase FUB7 (433 aa).

K211 carries the N6-(pyridoxal phosphate)lysine modification.

Belongs to the trans-sulfuration enzymes family. It depends on pyridoxal 5'-phosphate as a cofactor.

It functions in the pathway mycotoxin biosynthesis. In terms of biological role, sulfhydrylase; part of the gene cluster that mediates the biosynthesis of fusaric acid, a mycotoxin with low to moderate toxicity to animals and humans, but with high phytotoxic properties. L-aspartate is suggested as fusaric acid amino acid precursor that is activated and further processed to O-acetyl-L-homoserine by cluster enzymes aspartate kinase FUB3 and homoserine O-acetyltransferase FUB5, as well as enzymes of the primary metabolism. The polyketide synthase (PKS) FUB1 generates the triketide trans-2-hexenal which is presumptively released by the hydrolase FUB4 and linked to the NRPS-bound amino acid precursor by NAD(P)-dependent dehydrogenase FUB6. FUB1, FUB4, and the non-canonical NRPS Fub8 may form an enzyme complex. Further processing of the NRPS-bound intermediate might be carried out by FUB6 and the sulfhydrylase FUB7, enabling a spontaneous electrocyclization to close the carbon backbone of fusaric acid. Dihydrofusaric acid is likely to be released via reduction by the thioester reductase (TR) domain of FUB8 whereupon the final oxidation to fusaric acid may (also) be performed by the FMN-dependent dehydrogenase FUB9. This chain is Sulfhydrylase FUB7, found in Fusarium oxysporum f. sp. lycopersici (strain 4287 / CBS 123668 / FGSC 9935 / NRRL 34936) (Fusarium vascular wilt of tomato).